We begin with the raw amino-acid sequence, 232 residues long: uncharacterized protein (232 aa).

The tract at residues 1 to 71 (MSNPTIEGDE…KENERIKNDD (71 aa)) is disordered. A compositionally biased stretch (acidic residues) spans 25 to 38 (DDLDDLDDILDDLD). A compositionally biased stretch (basic and acidic residues) spans 44–71 (KNEEKKNIDEHKQTGNTSKENERIKNDD).

This is an uncharacterized protein from Schizosaccharomyces pombe (strain 972 / ATCC 24843) (Fission yeast).